Reading from the N-terminus, the 225-residue chain is Ribonuclease HII (225 aa).

Residues 2 to 210 (GIVVGVDEAG…VRKLGGPWRS (209 aa)) form the RNase H type-2 domain. A divalent metal cation is bound by residues Asp-8, Glu-9, and Asp-107.

Belongs to the RNase HII family. Mn(2+) serves as cofactor. It depends on Mg(2+) as a cofactor.

The protein resides in the cytoplasm. It carries out the reaction Endonucleolytic cleavage to 5'-phosphomonoester.. Its function is as follows. Endonuclease that specifically degrades the RNA of RNA-DNA hybrids. This chain is Ribonuclease HII (rnhB), found in Aeropyrum pernix (strain ATCC 700893 / DSM 11879 / JCM 9820 / NBRC 100138 / K1).